The primary structure comprises 432 residues: Adenylosuccinate synthetase (432 aa).

GTP is bound by residues 13–19 and 41–43; these read GDEGKGK and GHT. Asp-14 (proton acceptor) is an active-site residue. Positions 14 and 41 each coordinate Mg(2+). IMP contacts are provided by residues 14–17, 39–42, Thr-130, Arg-144, Gln-225, Thr-240, and Arg-304; these read DEGK and NAGH. His-42 serves as the catalytic Proton donor. Substrate is bound at residue 300–306; that stretch reads ATTGRSR. Residues Arg-306, 332–334, and 415–417 contribute to the GTP site; these read KLD and STG.

It belongs to the adenylosuccinate synthetase family. In terms of assembly, homodimer. Mg(2+) is required as a cofactor.

The protein resides in the cytoplasm. The enzyme catalyses IMP + L-aspartate + GTP = N(6)-(1,2-dicarboxyethyl)-AMP + GDP + phosphate + 2 H(+). The protein operates within purine metabolism; AMP biosynthesis via de novo pathway; AMP from IMP: step 1/2. Functionally, plays an important role in the de novo pathway of purine nucleotide biosynthesis. Catalyzes the first committed step in the biosynthesis of AMP from IMP. The chain is Adenylosuccinate synthetase from Proteus mirabilis (strain HI4320).